Reading from the N-terminus, the 593-residue chain is Autophagy-related protein 22-2 (593 aa).

The helical transmembrane segment at 42 to 62 (YGVAAEVFAVCGVGSFLPLTL) threads the bilayer. Asn90 is a glycosylation site (N-linked (GlcNAc...) asparagine). 3 helical membrane-spanning segments follow: residues 112-132 (SFAMYTFSLAVLIQALTLVSF), 159-179 (LFMLIVPPVFVLGALLVVIGV), and 181-201 (CLGSSFVVLNSFLPILVANDP). Residues 228–261 (SWTDEEDTGDHAGPAGSKKAVEPEKASSSTSPEL) form a disordered region. 4 helical membrane-spanning segments follow: residues 271–291 (GVGLGYCAAVLVQILSILLLF), 305–325 (LPLRFVLLLVGIWWAAFTVVC), 377–397 (VVVFLAAWFLISDAIATVSGT), and 415–435 (LLSITATMSGMAGAFLWPIVA). N-linked (GlcNAc...) asparagine glycosylation occurs at Asn443. 4 consecutive transmembrane segments (helical) span residues 448-468 (LCIALFEIIPLYGMLAYIPFI), 480-500 (WEIFPLGIVHGVVSGGLASYC), 525-545 (KGSSFVGPAIVGALIDATGSV), and 548-568 (GFIFIGVLILLPMPLVWLVNA).

It belongs to the ATG22 family.

The protein resides in the vacuole membrane. Vacuolar effluxer which mediate the efflux of amino acids resulting from autophagic degradation. The release of autophagic amino acids allows the maintenance of protein synthesis and viability during nitrogen starvation. The protein is Autophagy-related protein 22-2 (atg22-2) of Emericella nidulans (strain FGSC A4 / ATCC 38163 / CBS 112.46 / NRRL 194 / M139) (Aspergillus nidulans).